A 523-amino-acid chain; its full sequence is 2-isopropylmalate synthase (523 aa).

Positions 5 to 267 (VIIFDTTLRD…HTNINHHEIW (263 aa)) constitute a Pyruvate carboxyltransferase domain. Residues aspartate 14, histidine 202, histidine 204, and asparagine 238 each coordinate Mn(2+). The regulatory domain stretch occupies residues 392–523 (RLDYFSVQSG…HNKENNKEIV (132 aa)).

The protein belongs to the alpha-IPM synthase/homocitrate synthase family. LeuA type 1 subfamily. Homodimer. The cofactor is Mn(2+).

It localises to the cytoplasm. It carries out the reaction 3-methyl-2-oxobutanoate + acetyl-CoA + H2O = (2S)-2-isopropylmalate + CoA + H(+). It participates in amino-acid biosynthesis; L-leucine biosynthesis; L-leucine from 3-methyl-2-oxobutanoate: step 1/4. Its function is as follows. Catalyzes the condensation of the acetyl group of acetyl-CoA with 3-methyl-2-oxobutanoate (2-ketoisovalerate) to form 3-carboxy-3-hydroxy-4-methylpentanoate (2-isopropylmalate). This is 2-isopropylmalate synthase from Salmonella arizonae (strain ATCC BAA-731 / CDC346-86 / RSK2980).